Consider the following 391-residue polypeptide: Succinate--CoA ligase [ADP-forming] subunit beta (391 aa).

The region spanning K9 to E248 is the ATP-grasp domain. ATP-binding positions include K50, G57–G59, E103, M106, and E111. 2 residues coordinate Mg(2+): N203 and D217. Substrate-binding positions include N268 and G325–V327.

This sequence belongs to the succinate/malate CoA ligase beta subunit family. In terms of assembly, heterotetramer of two alpha and two beta subunits. It depends on Mg(2+) as a cofactor.

It carries out the reaction succinate + ATP + CoA = succinyl-CoA + ADP + phosphate. The enzyme catalyses GTP + succinate + CoA = succinyl-CoA + GDP + phosphate. It participates in carbohydrate metabolism; tricarboxylic acid cycle; succinate from succinyl-CoA (ligase route): step 1/1. Its function is as follows. Succinyl-CoA synthetase functions in the citric acid cycle (TCA), coupling the hydrolysis of succinyl-CoA to the synthesis of either ATP or GTP and thus represents the only step of substrate-level phosphorylation in the TCA. The beta subunit provides nucleotide specificity of the enzyme and binds the substrate succinate, while the binding sites for coenzyme A and phosphate are found in the alpha subunit. This Chlorobium luteolum (strain DSM 273 / BCRC 81028 / 2530) (Pelodictyon luteolum) protein is Succinate--CoA ligase [ADP-forming] subunit beta.